Reading from the N-terminus, the 264-residue chain is Diphthine synthase (264 aa).

S-adenosyl-L-methionine-binding positions include Leu10, Asp87, Val90, 115–116 (SI), Leu166, Ala209, and His234.

This sequence belongs to the diphthine synthase family. As to quaternary structure, homodimer.

The catalysed reaction is 2-[(3S)-amino-3-carboxypropyl]-L-histidyl-[translation elongation factor 2] + 3 S-adenosyl-L-methionine = diphthine-[translation elongation factor 2] + 3 S-adenosyl-L-homocysteine + 3 H(+). Its pathway is protein modification; peptidyl-diphthamide biosynthesis. In terms of biological role, S-adenosyl-L-methionine-dependent methyltransferase that catalyzes the trimethylation of the amino group of the modified target histidine residue in translation elongation factor 2 (EF-2), to form an intermediate called diphthine. The three successive methylation reactions represent the second step of diphthamide biosynthesis. In Thermococcus kodakarensis (strain ATCC BAA-918 / JCM 12380 / KOD1) (Pyrococcus kodakaraensis (strain KOD1)), this protein is Diphthine synthase.